The primary structure comprises 234 residues: Glucosamine-6-phosphate deaminase (234 aa).

The Proton acceptor; for enolization step role is filled by D62. The active-site For ring-opening step is N128. The Proton acceptor; for ring-opening step role is filled by H130. Residue E135 is the For ring-opening step of the active site.

The protein belongs to the glucosamine/galactosamine-6-phosphate isomerase family. NagB subfamily.

It catalyses the reaction alpha-D-glucosamine 6-phosphate + H2O = beta-D-fructose 6-phosphate + NH4(+). It functions in the pathway amino-sugar metabolism; N-acetylneuraminate degradation; D-fructose 6-phosphate from N-acetylneuraminate: step 5/5. Functionally, catalyzes the reversible isomerization-deamination of glucosamine 6-phosphate (GlcN6P) to form fructose 6-phosphate (Fru6P) and ammonium ion. The chain is Glucosamine-6-phosphate deaminase from Streptococcus suis (strain 98HAH33).